The primary structure comprises 89 residues: Signal recognition particle 19 kDa protein (89 aa).

It belongs to the SRP19 family. Part of the signal recognition particle protein translocation system, which is composed of SRP and FtsY. Archaeal SRP consists of a 7S RNA molecule of 300 nucleotides and two protein subunits: SRP54 and SRP19.

It is found in the cytoplasm. Its function is as follows. Involved in targeting and insertion of nascent membrane proteins into the cytoplasmic membrane. Binds directly to 7S RNA and mediates binding of the 54 kDa subunit of the SRP. This chain is Signal recognition particle 19 kDa protein, found in Methanococcus vannielii (strain ATCC 35089 / DSM 1224 / JCM 13029 / OCM 148 / SB).